The sequence spans 360 residues: D-alanine--D-alanine ligase (360 aa).

Positions K146 to R352 constitute an ATP-grasp domain. K179–E234 provides a ligand contact to ATP. 3 residues coordinate Mg(2+): D305, E319, and N321.

Belongs to the D-alanine--D-alanine ligase family. Requires Mg(2+) as cofactor. It depends on Mn(2+) as a cofactor.

It is found in the cytoplasm. The catalysed reaction is 2 D-alanine + ATP = D-alanyl-D-alanine + ADP + phosphate + H(+). Its pathway is cell wall biogenesis; peptidoglycan biosynthesis. Functionally, cell wall formation. The chain is D-alanine--D-alanine ligase from Chlorobium phaeobacteroides (strain BS1).